Consider the following 439-residue polypeptide: ATP-dependent RNA helicase SUB2 (439 aa).

Residues 1–19 (MSHEGEEDLLEYSDNEQEI) show a composition bias toward acidic residues. Residues 1–48 (MSHEGEEDLLEYSDNEQEIQVDNKETAVEGTTENEATQENGEADKKGS) are disordered. A compositionally biased stretch (polar residues) spans 29-40 (EGTTENEATQEN). A Q motif motif is present at residues 55 to 83 (TGFKDFLLKPELSRAIIDCGFEHPSEVQQ). In terms of domain architecture, Helicase ATP-binding spans 86–261 (IPQSIHGTDV…RRFLQNPLEI (176 aa)). 99–106 (AKSGLGKT) serves as a coordination point for ATP. The short motif at 208–211 (DECD) is the DECD box element. The Helicase C-terminal domain occupies 273-434 (GLQQYYIKLE…EFPEEGIDPS (162 aa)).

Belongs to the DEAD box helicase family. DECD subfamily.

It localises to the nucleus. The enzyme catalyses ATP + H2O = ADP + phosphate + H(+). Its function is as follows. ATP-binding RNA helicase involved in transcription elongation and required for the export of mRNA out of the nucleus. SUB2 also plays a role in pre-mRNA splicing and spliceosome assembly. May be involved in rDNA and telomeric silencing, and maintenance of genome integrity. The protein is ATP-dependent RNA helicase SUB2 (SUB2) of Candida glabrata (strain ATCC 2001 / BCRC 20586 / JCM 3761 / NBRC 0622 / NRRL Y-65 / CBS 138) (Yeast).